The sequence spans 337 residues: uncharacterized protein (337 aa).

The AFP-like domain occupies 279 to 337 (SIVAKRNIKKGEYLSVDNISFKRPGRGIETKYLSIILNRKIKNDKEEDDIIYWDDLLGD).

To B.subtilis SpsE.

This is an uncharacterized protein from Methanocaldococcus jannaschii (strain ATCC 43067 / DSM 2661 / JAL-1 / JCM 10045 / NBRC 100440) (Methanococcus jannaschii).